A 294-amino-acid chain; its full sequence is MKRKWERDLGLQGRMLFTMFLLAAVYLFFLAFLSYYGTSQIFIILFIGLFMAAQYFYSDKMVLWTTGAQIVSESEAPQLHGMITRLCAIADLPKPQVAIVRTQVPNAFATGRNQNKAVVAVTTGLMDKLSPAELEAVLAHELSHVKNRDMAVLTIASFLSSVAFYIVRYSLYFGNMGGGRRKEGGGIMLVWLVSIVVWIVSFLLIRALSRYREFSADRGAAVITGQPANLASALMKISGVMDRVPGDDLRKVEGMNAFFIIPAISGSSIMDIFSTHPSVEKRIAKLEKMQQEMS.

Helical transmembrane passes span 15 to 35 and 36 to 56; these read MLFTMFLLAAVYLFFLAFLSY and YGTSQIFIILFIGLFMAAQYF. A Zn(2+)-binding site is contributed by His140. Glu141 is a catalytic residue. His144 contributes to the Zn(2+) binding site. 2 helical membrane passes run 151–171 and 185–205; these read AVLTIASFLSSVAFYIVRYSL and GGIMLVWLVSIVVWIVSFLLI. Glu213 contributes to the Zn(2+) binding site.

It belongs to the peptidase M48B family. Zn(2+) serves as cofactor.

It localises to the cell membrane. The protein is Protease HtpX homolog 2 of Methanosarcina mazei (strain ATCC BAA-159 / DSM 3647 / Goe1 / Go1 / JCM 11833 / OCM 88) (Methanosarcina frisia).